We begin with the raw amino-acid sequence, 60 residues long: UPF0434 protein ETA_21370 (60 aa).

This sequence belongs to the UPF0434 family.

The polypeptide is UPF0434 protein ETA_21370 (Erwinia tasmaniensis (strain DSM 17950 / CFBP 7177 / CIP 109463 / NCPPB 4357 / Et1/99)).